The following is a 638-amino-acid chain: Chaperone protein HtpG (638 aa).

The tract at residues 1 to 345 is a; substrate-binding; the sequence is MTTETFEFQV…AQDLSLNVSR (345 aa). Positions 346-560 are b; that stretch reads EILQQDRHIR…AGELTPALEN (215 aa). Residues 561 to 638 form a c region; it reads MYRAMGQEVP…LMADRLERTL (78 aa).

The protein belongs to the heat shock protein 90 family. In terms of assembly, homodimer.

The protein resides in the cytoplasm. Its function is as follows. Molecular chaperone. Has ATPase activity. The sequence is that of Chaperone protein HtpG from Streptomyces coelicolor (strain ATCC BAA-471 / A3(2) / M145).